Reading from the N-terminus, the 99-residue chain is Ragulator complex protein LAMTOR4 (99 aa).

Met1 bears the N-acetylmethionine mark. N-acetylthreonine; in Ragulator complex protein LAMTOR4, N-terminally processed is present on Thr2. At Ser67 the chain carries Phosphoserine; by PKA.

Belongs to the LAMTOR4 family. In terms of assembly, part of the Ragulator complex composed of LAMTOR1, LAMTOR2, LAMTOR3, LAMTOR4 and LAMTOR5. LAMTOR4 and LAMTOR5 form a heterodimer that interacts, through LAMTOR1, with a LAMTOR2, LAMTOR3 heterodimer. The Ragulator complex interacts with both the mTORC1 complex and heterodimers constituted of the Rag GTPases RagA/RRAGA, RagB/RRAGB, RagC/RRAGC and RagD/RRAGD; regulated by amino acid availability. The Ragulator complex interacts with SLC38A9; the probable amino acid sensor. Component of the lysosomal folliculin complex (LFC), composed of FLCN, FNIP1 (or FNIP2), RagA/RRAGA or RagB/RRAGB GDP-bound, RagC/RRAGC or RagD/RRAGD GTP-bound, and Ragulator. In terms of processing, phosphorylation at Ser-67 by PKA inhibits Ragulator complex assembly.

It is found in the lysosome. As part of the Ragulator complex it is involved in amino acid sensing and activation of mTORC1, a signaling complex promoting cell growth in response to growth factors, energy levels, and amino acids. Activated by amino acids through a mechanism involving the lysosomal V-ATPase, the Ragulator plays a dual role for the small GTPases Rag (RagA/RRAGA, RagB/RRAGB, RagC/RRAGC and/or RagD/RRAGD): it (1) acts as a guanine nucleotide exchange factor (GEF), activating the small GTPases Rag and (2) mediates recruitment of Rag GTPases to the lysosome membrane. Activated Ragulator and Rag GTPases function as a scaffold recruiting mTORC1 to lysosomes where it is in turn activated. This Homo sapiens (Human) protein is Ragulator complex protein LAMTOR4.